The sequence spans 343 residues: Cyclin-Y-like protein 1-B (343 aa).

The disordered stretch occupies residues methionine 1 to alanine 69. Positions alanine 17–glutamate 28 are enriched in basic and acidic residues. The Cyclin N-terminal domain occupies aspartate 145–asparagine 267.

Belongs to the cyclin family. Cyclin Y subfamily.

This chain is Cyclin-Y-like protein 1-B (ccnyl1-b), found in Xenopus laevis (African clawed frog).